The chain runs to 718 residues: MKQLFATTSRGFEELLKVELTDLGAQECRVVQGGVHFIANDETQYRILLWSRLSSRILLPLITTKIYSDLDLYSAIVGQNWLTHFDERVTFLVDFNGTNREIRHTQFGAMRVKDGIVDYFERHGKTRPNVDKEYPDIRIHAYLNQDELVVSLDLSGEALHLRGYREDTGKAPLRETLAAAIVLRSSWEKGTPLVDPMCGSGTLLIEAAQMEAQIAPQLHRLHWGFDFWKGHNQVVWEKVKQEAVELAEQAFNRKLTPHFWGFDLDHRVLKKAQKNAQNAGVSHLIKWQQGDVAGLKNPTEQEIGTVICNPPYGERLGTTPALIALYSVFGRQLKTEFADWNVSIFSGEPALLDCLRLRAYRQFKAKNGPLDCVQKNYHIAVRKQVESAVENSQEKTLTFVSENTQVAQDFANRLRKNIKKIDKWANQQKLDAYRLYDADLPEYNLAVDRYADHIIVQEYAAPKNVDENKARQRLLDAVSAILSVTGIETNKLILKVRQKQKGTSQYEKLANKGEYFYVHEYGAKLWVNLTDYLDTGLFLDHRLTRKMLGEMAVGKDFLNLFAYTGSATVHAALGLAKSTTTVDMSNTYLNWAEQNLLLNDIEGKQHKLIQADCLQWLNKCDRQFDLIFVDPPTFSNSKRMEDSWDVQRDHIKLMANLKRILRTNGTIVFSNNKRGFKMDIDGLQELELSAVEISAKTLPLDFERNKQIHNCWIIRHQS.

One can recognise a THUMP domain in the interval 43 to 154 (TQYRILLWSR…QDELVVSLDL (112 aa)).

The protein belongs to the methyltransferase superfamily. RlmKL family.

Its subcellular location is the cytoplasm. It carries out the reaction guanosine(2445) in 23S rRNA + S-adenosyl-L-methionine = N(2)-methylguanosine(2445) in 23S rRNA + S-adenosyl-L-homocysteine + H(+). It catalyses the reaction guanosine(2069) in 23S rRNA + S-adenosyl-L-methionine = N(2)-methylguanosine(2069) in 23S rRNA + S-adenosyl-L-homocysteine + H(+). Functionally, specifically methylates the guanine in position 2445 (m2G2445) and the guanine in position 2069 (m7G2069) of 23S rRNA. The polypeptide is Ribosomal RNA large subunit methyltransferase K/L (Histophilus somni (strain 2336) (Haemophilus somnus)).